A 313-amino-acid chain; its full sequence is tRNA-cytidine(32) 2-sulfurtransferase (313 aa).

The PP-loop motif signature appears at 46-51; the sequence is SGGKDS. [4Fe-4S] cluster contacts are provided by cysteine 121, cysteine 124, and cysteine 212.

This sequence belongs to the TtcA family. Homodimer. It depends on Mg(2+) as a cofactor. The cofactor is [4Fe-4S] cluster.

It is found in the cytoplasm. It catalyses the reaction cytidine(32) in tRNA + S-sulfanyl-L-cysteinyl-[cysteine desulfurase] + AH2 + ATP = 2-thiocytidine(32) in tRNA + L-cysteinyl-[cysteine desulfurase] + A + AMP + diphosphate + H(+). It participates in tRNA modification. In terms of biological role, catalyzes the ATP-dependent 2-thiolation of cytidine in position 32 of tRNA, to form 2-thiocytidine (s(2)C32). The sulfur atoms are provided by the cysteine/cysteine desulfurase (IscS) system. This Nitrosomonas eutropha (strain DSM 101675 / C91 / Nm57) protein is tRNA-cytidine(32) 2-sulfurtransferase.